A 185-amino-acid polypeptide reads, in one-letter code: Ribosome-recycling factor (185 aa).

The protein belongs to the RRF family.

The protein localises to the cytoplasm. Responsible for the release of ribosomes from messenger RNA at the termination of protein biosynthesis. May increase the efficiency of translation by recycling ribosomes from one round of translation to another. This Streptococcus suis (strain 98HAH33) protein is Ribosome-recycling factor.